The primary structure comprises 68 residues: Conotoxin ArMMSK-01 (68 aa).

Positions 1 to 20 (MMSKLGVLLTICMLLFPLTA) are cleaved as a signal peptide. A propeptide spanning residues 21–51 (LPLDGDQPADRPAERMQDDFISEQHPLFNPI) is cleaved from the precursor. Cystine bridges form between C54–C67, C55–C63, and C59–C66. P65 carries the post-translational modification 4-hydroxyproline.

The protein belongs to the conotoxin M superfamily. In terms of tissue distribution, expressed by the venom duct.

Its subcellular location is the secreted. This chain is Conotoxin ArMMSK-01, found in Conus arenatus (Sand-dusted cone).